A 388-amino-acid polypeptide reads, in one-letter code: Succinate--CoA ligase [ADP-forming] subunit beta (388 aa).

Residues 9–244 enclose the ATP-grasp domain; it reads KSLFAEYGLP…PSQDDAREAH (236 aa). ATP is bound by residues K46, 53 to 55, E99, T102, and E107; that span reads GRG. Residues N199 and D213 each contribute to the Mg(2+) site. Residues N264 and 321–323 each bind substrate; that span reads GIV.

This sequence belongs to the succinate/malate CoA ligase beta subunit family. In terms of assembly, heterotetramer of two alpha and two beta subunits. Mg(2+) serves as cofactor.

It catalyses the reaction succinate + ATP + CoA = succinyl-CoA + ADP + phosphate. It carries out the reaction GTP + succinate + CoA = succinyl-CoA + GDP + phosphate. The protein operates within carbohydrate metabolism; tricarboxylic acid cycle; succinate from succinyl-CoA (ligase route): step 1/1. Functionally, succinyl-CoA synthetase functions in the citric acid cycle (TCA), coupling the hydrolysis of succinyl-CoA to the synthesis of either ATP or GTP and thus represents the only step of substrate-level phosphorylation in the TCA. The beta subunit provides nucleotide specificity of the enzyme and binds the substrate succinate, while the binding sites for coenzyme A and phosphate are found in the alpha subunit. In Shewanella baltica (strain OS195), this protein is Succinate--CoA ligase [ADP-forming] subunit beta.